The primary structure comprises 492 residues: MLEVGTIWGFTSTTMASIMFLWPMYKQFVPYQLREYLENTIQKYLDKLFRRDSNFVYIRFPEYTGEGLSKSRAYDEIGNYLSSISTARAKRLKAKESENSKSLVLCLDDDEAVVVVFQGVNVVWSSTVVDKEDKHNSKEGRYLTLTFENHHRDIITNTYIDHVLREGKEIALKNRERKLYTNNDSSSYSSWWEGLWSNVPFNHHASFETLGMDLDKKEEIKKDLIKFTKGKDYYRKVAKPWKRGYLLFGPPGTGKSTMISAIANFLEYDVYDLELTTVKDNAELKKLMLDTKGKSIVVIEDIDCSLELTEHRKKKKEEDEDKEEKKEAENLKRVSGNNESNVTLSGLLNAIDGLWSACSDEKIIIFTTNFVDNLDPALIRRGRMDYHIEMSYCRFEAFKVLAKNYLENESHDLYGEIGRLLEEVDVSPADVAENLMPKSDEDDADICFRRLVKSLEEEKKKKIEKEARKNKKKAEDNVKQEKQNKVKGMVTK.

The helical transmembrane segment at 7–25 (IWGFTSTTMASIMFLWPMY) threads the bilayer. 249–256 (GPPGTGKS) is a binding site for ATP. Disordered regions lie at residues 313–334 (KKKK…LKRV) and 462–492 (KIEK…MVTK). 2 stretches are compositionally biased toward basic and acidic residues: residues 323-332 (EEKKEAENLK) and 462-484 (KIEK…EKQN).

This sequence belongs to the AAA ATPase family. BCS1 subfamily. Requires Mg(2+) as cofactor.

Its subcellular location is the membrane. It carries out the reaction ATP + H2O = ADP + phosphate + H(+). The polypeptide is AAA-ATPase At3g28520 (Arabidopsis thaliana (Mouse-ear cress)).